We begin with the raw amino-acid sequence, 409 residues long: Serine/threonine transporter SstT (409 aa).

Helical transmembrane passes span Leu-24 to Phe-44, Phe-48 to Ile-68, Ile-82 to Met-102, Ala-142 to Leu-162, Leu-194 to Gly-214, Leu-218 to Val-238, Ile-292 to Met-312, and Gly-319 to Cys-339.

Belongs to the dicarboxylate/amino acid:cation symporter (DAACS) (TC 2.A.23) family.

The protein resides in the cell inner membrane. The enzyme catalyses L-serine(in) + Na(+)(in) = L-serine(out) + Na(+)(out). It catalyses the reaction L-threonine(in) + Na(+)(in) = L-threonine(out) + Na(+)(out). In terms of biological role, involved in the import of serine and threonine into the cell, with the concomitant import of sodium (symport system). The protein is Serine/threonine transporter SstT of Neisseria meningitidis serogroup B (strain ATCC BAA-335 / MC58).